The chain runs to 366 residues: Galactoside alpha-(1,2)-fucosyltransferase 1 (366 aa).

At 1 to 8 the chain is on the cytoplasmic side; sequence MWPLSHRH. A helical; Signal-anchor for type II membrane protein membrane pass occupies residues 9–25; the sequence is LCLAFLLVCVLSAISFF. Residues 26–366 lie on the Lumenal side of the membrane; sequence LHIHQDSFRH…LSPLWTLAEP (341 aa). N-linked (GlcNAc...) asparagine glycosylation is found at N66, N302, and N328.

This sequence belongs to the glycosyltransferase 11 family.

Its subcellular location is the golgi apparatus. The protein resides in the golgi stack membrane. The catalysed reaction is a beta-D-galactosyl-(1-&gt;4)-N-acetyl-beta-D-glucosaminyl derivative + GDP-beta-L-fucose = an alpha-L-Fuc-(1-&gt;2)-beta-D-Gal-(1-&gt;4)-beta-D-GlcNAc derivative + GDP + H(+). The enzyme catalyses a ganglioside GA1 + GDP-beta-L-fucose = a ganglioside Fuc-GA1 + GDP + H(+). It carries out the reaction a beta-D-Gal-(1-&gt;3)-beta-D-GlcNAc-(1-&gt;3)-beta-D-Gal-(1-&gt;4)-beta-D-Glc-(1&lt;-&gt;1')-Cer(d18:1(4E)) + GDP-beta-L-fucose = alpha-L-fucosyl-(1-&gt;2)- beta-D-galactosyl-(1-&gt;3)-N-acetyl-beta-D-glucosaminyl-(1-&gt;3)-beta-D-galactosyl-(1-&gt;4)-beta-D-glucosyl-(1&lt;-&gt;1')-N-acylsphing-4-enine + GDP + H(+). It catalyses the reaction a neolactoside nLc4Cer(d18:1(4E)) + GDP-beta-L-fucose = a neolactoside IV(2)-alpha-Fuc-nLc4Cer(d18:1(4E)) + GDP + H(+). The catalysed reaction is a ganglioside GM1 + GDP-beta-L-fucose = a ganglioside Fuc-GM1 + GDP + H(+). The enzyme catalyses beta-D-galactosyl-(1-&gt;3)-N-acetyl-D-galactosamine + GDP-beta-L-fucose = alpha-L-fucosyl-(1-&gt;2)-beta-D-galactosyl-(1-&gt;3)-N-acetyl-D-galactosamine + GDP + H(+). It participates in protein modification; protein glycosylation. In terms of biological role, catalyzes the transfer of L-fucose, from a guanosine diphosphate-beta-L-fucose, to the terminal galactose residue of glycoconjugates through an alpha(1,2) linkage leading to H antigen synthesis that is an intermediate substrate in the synthesis of ABO blood group antigens. H antigen is essential for maturation of the glomerular layer of the main olfactory bulb, in cell migration and early cell-cell contacts during tumor associated angiogenesis. Preferentially fucosylates soluble lactose and to a lesser extent fucosylates glycolipids gangliosides GA1 and GM1a. The polypeptide is Galactoside alpha-(1,2)-fucosyltransferase 1 (Plecturocebus brunneus (Brown titi monkey)).